The primary structure comprises 431 residues: 5-methylthioadenosine/S-adenosylhomocysteine deaminase (431 aa).

Zn(2+) is bound by residues H66 and H68. Substrate is bound by residues E95, R147, and H185. Residue H212 coordinates Zn(2+). Substrate contacts are provided by E215 and D300. D300 is a binding site for Zn(2+).

This sequence belongs to the metallo-dependent hydrolases superfamily. MTA/SAH deaminase family. Zn(2+) serves as cofactor.

The enzyme catalyses S-adenosyl-L-homocysteine + H2O + H(+) = S-inosyl-L-homocysteine + NH4(+). It catalyses the reaction S-methyl-5'-thioadenosine + H2O + H(+) = S-methyl-5'-thioinosine + NH4(+). Its function is as follows. Catalyzes the deamination of 5-methylthioadenosine and S-adenosyl-L-homocysteine into 5-methylthioinosine and S-inosyl-L-homocysteine, respectively. Is also able to deaminate adenosine. The protein is 5-methylthioadenosine/S-adenosylhomocysteine deaminase of Acetivibrio thermocellus (strain ATCC 27405 / DSM 1237 / JCM 9322 / NBRC 103400 / NCIMB 10682 / NRRL B-4536 / VPI 7372) (Clostridium thermocellum).